The primary structure comprises 189 residues: Large ribosomal subunit protein bL9 (189 aa).

Belongs to the bacterial ribosomal protein bL9 family.

Functionally, binds to the 23S rRNA. This Cereibacter sphaeroides (strain ATCC 17025 / ATH 2.4.3) (Rhodobacter sphaeroides) protein is Large ribosomal subunit protein bL9.